Reading from the N-terminus, the 358-residue chain is Plastoglobulin-1, chloroplastic (358 aa).

The N-terminal 47 residues, M1–A47, are a transit peptide targeting the chloroplast. The interval A48 to F114 is disordered.

This sequence belongs to the PAP/fibrillin family.

The protein resides in the plastid. It localises to the chloroplast. Its function is as follows. May form together with other plastoglobulins a coat on the surface of the lipoprotein particle. The coat may contain receptors for attachment to the thylakoid membrane as well as regulatory proteins that may function in the transfer of lipids to and from the thylakoid membranes. The protein is Plastoglobulin-1, chloroplastic (PG1) of Pisum sativum (Garden pea).